A 452-amino-acid chain; its full sequence is Glucose-6-phosphate isomerase (452 aa).

The active-site Proton donor is Glu-290. Catalysis depends on residues His-311 and Lys-425.

It belongs to the GPI family.

Its subcellular location is the cytoplasm. The catalysed reaction is alpha-D-glucose 6-phosphate = beta-D-fructose 6-phosphate. It functions in the pathway carbohydrate biosynthesis; gluconeogenesis. Its pathway is carbohydrate degradation; glycolysis; D-glyceraldehyde 3-phosphate and glycerone phosphate from D-glucose: step 2/4. In terms of biological role, catalyzes the reversible isomerization of glucose-6-phosphate to fructose-6-phosphate. The polypeptide is Glucose-6-phosphate isomerase (Limosilactobacillus reuteri (strain DSM 20016) (Lactobacillus reuteri)).